Consider the following 167-residue polypeptide: Ubiquitin-fold modifier-conjugating enzyme 1 (167 aa).

The Glycyl thioester intermediate role is filled by cysteine 116.

Belongs to the ubiquitin-conjugating enzyme family. UFC1 subfamily. As to quaternary structure, interacts with UBA5 (via C-terminus). Interacts with UFL1. Interacts with UFM1.

In terms of biological role, E2-like enzyme which specifically catalyzes the second step in ufmylation. Accepts the ubiquitin-like modifier UFM1 from the E1 enzyme UBA5 and forms an intermediate with UFM1 via a thioester linkage. Ufmylation is involved in various processes, such as ribosome recycling, response to DNA damage, interferon response or reticulophagy (also called ER-phagy). In Salmo salar (Atlantic salmon), this protein is Ubiquitin-fold modifier-conjugating enzyme 1.